The chain runs to 1235 residues: Major DNA-binding protein (1235 aa).

A disordered region spans residues 536 to 584 (GGLDGKGDDGVPGGGAGGGGGRDVSGGPSDGLGGGRGGGGGGDSGGMMG). Positions 545 to 584 (GVPGGGAGGGGGRDVSGGPSDGLGGGRGGGGGGDSGGMMG) are enriched in gly residues. Positions 846–847 (FW) match the Required for filament formation motif. Gly residues predominate over residues 1214–1226 (GVGGSSGGGGGSG). The tract at residues 1214–1235 (GVGGSSGGGGGSGLLPAKRSRL) is disordered. The tract at residues 1232–1235 (RSRL) is required for nuclear localization.

It belongs to the herpesviridae major DNA-binding protein family. Homooligomers. Forms double-helical filaments necessary for the formation of replication compartments within the host nucleus. Interacts with the origin-binding protein. Interacts with the helicase primase complex; this interaction stimulates primer synthesis activity of the helicase-primase complex. Interacts with the DNA polymerase. Interacts with the alkaline exonuclease; this interaction increases its nuclease processivity.

It is found in the host nucleus. In terms of biological role, plays several crucial roles in viral infection. Participates in the opening of the viral DNA origin to initiate replication by interacting with the origin-binding protein. May disrupt loops, hairpins and other secondary structures present on ssDNA to reduce and eliminate pausing of viral DNA polymerase at specific sites during elongation. Promotes viral DNA recombination by performing strand-transfer, characterized by the ability to transfer a DNA strand from a linear duplex to a complementary single-stranded DNA circle. Can also catalyze the renaturation of complementary single strands. Additionally, reorganizes the host cell nucleus, leading to the formation of prereplicative sites and replication compartments. This process is driven by the protein which can form double-helical filaments in the absence of DNA. This is Major DNA-binding protein from Homo sapiens (Human).